Reading from the N-terminus, the 160-residue chain is uncharacterized protein (160 aa).

A helical transmembrane segment spans residues 1 to 21 (MSIQTLIIISIVIFILWLTFT).

The protein belongs to the IIV-6 203L/325L family.

The protein localises to the membrane. This is an uncharacterized protein from Invertebrate iridescent virus 6 (IIV-6).